The chain runs to 200 residues: Putative 3-methyladenine DNA glycosylase (200 aa).

This sequence belongs to the DNA glycosylase MPG family.

This Methanocella arvoryzae (strain DSM 22066 / NBRC 105507 / MRE50) protein is Putative 3-methyladenine DNA glycosylase.